Reading from the N-terminus, the 487-residue chain is 4-alpha-glucanotransferase (487 aa).

Belongs to the disproportionating enzyme family.

It localises to the cytoplasm. It catalyses the reaction Transfers a segment of a (1-&gt;4)-alpha-D-glucan to a new position in an acceptor, which may be glucose or a (1-&gt;4)-alpha-D-glucan.. Functionally, catalyzes a disproportionation reaction in which single or multiple glucose units from oligosaccharides are transferred to the 4-hydroxyl group of acceptor sugars. Glucose, maltose and maltotriose can act as acceptor, whereas of the three only maltotriose can act as donor. In Clostridium butyricum, this protein is 4-alpha-glucanotransferase (malQ).